We begin with the raw amino-acid sequence, 421 residues long: CinA-like protein (421 aa).

Belongs to the CinA family.

This chain is CinA-like protein, found in Synechococcus sp. (strain ATCC 27144 / PCC 6301 / SAUG 1402/1) (Anacystis nidulans).